The following is a 216-amino-acid chain: Refilin-B (216 aa).

The interval 1–52 (MVGRLSLQDVPELVDTKKKGDGVLDSPDSGLPPSPSPSHWGLAAATGGGGER) is disordered. 2 positions are modified to phosphoserine: S6 and S26.

This sequence belongs to the Refilin family. In terms of assembly, interacts with FLNA and FLNB.

It localises to the cytoplasm. It is found in the cytoskeleton. In terms of biological role, involved in the regulation of the perinuclear actin network and nuclear shape through interaction with filamins. Plays an essential role in the formation of cartilaginous skeletal elements. The chain is Refilin-B from Rattus norvegicus (Rat).